We begin with the raw amino-acid sequence, 112 residues long: Cytoplasmic envelopment protein 3 (112 aa).

Glycine 2 carries N-myristoyl glycine; by host lipidation. A disordered region spans residues 84–112 (GANKGGGKRTSSLKSAKNGAGVKKKVRAL).

Belongs to the herpesviridae cytoplasmic envelopment protein 3 family. In terms of assembly, interacts with cytoplasmic envelopment protein 2; this interaction is essential for the proper localization of each protein to the assembly complex and thus for the production of infectious virus. Post-translationally, myristoylation and palmitoylation (probably on one or more of the nearby cysteines at the N-terminus) enable membrane-binding and Golgi apparatus-specific targeting and are essential for efficient packaging. Phosphorylated. Phosphorylation does not seem to be required for recycling to the host Golgi apparatus. Packaging is selective for underphosphorylated forms.

Its subcellular location is the virion tegument. The protein localises to the virion membrane. The protein resides in the host cell membrane. It localises to the host Golgi apparatus membrane. In terms of biological role, plays an important role in the cytoplasmic envelopment of tegument proteins and capsids during the assembly and egress processes. Also participates in viral entry at the fusion step probably by regulating the core fusion machinery. The chain is Cytoplasmic envelopment protein 3 (UL99) from Murid herpesvirus 1 (strain K181) (MuHV-1).